We begin with the raw amino-acid sequence, 97 residues long: Peptide YY-A (97 aa).

An N-terminal signal peptide occupies residues 1 to 28 (MAVMLKPWTVVATVLICVLLCLGTFVDA). Tyrosine amide is present on Tyr64. Residues 68 to 97 (STSEDVMAELLFGDDTEHKQRSRYDDSFMW) constitute a propeptide, C-terminal extension.

It belongs to the NPY family. As to expression, mainly expressed in brainstem neurons, and in the telencephalon. Also expressed in intestinal endocrine cells.

It is found in the secreted. This Danio rerio (Zebrafish) protein is Peptide YY-A (pyya).